We begin with the raw amino-acid sequence, 346 residues long: MERPGSNGSCSGCRLEGGPAARAASGLAAVLIVTIVVDVLGNALVILSVLRNKKLRNAGNIFVVSLSVADLVVAVYPYPLILSAIFHNGWTMGNIHCQISGFLMGLSVIGSIFNITAIAINRYCYICHSLRYDKLFNLKNTCCYICLTWTLTVVAIVPNFFVGSLQYDPRIYSCTFAQTVSTSYTITVVVVHFIVPLSIVTFCYLRIWILVIQVKHRVRQDCKQKIRAADIRNFLTMFVVFVLFAVCWGPLNFIGLAVSINPSKVQPHIPEWLFVLSYFMAYFNSCLNAVIYGLLNQNFRKEYKRILLMLRTPRLLFIDVSKGGTEGLKSKPSPAVTNNNQAEIHL.

Over 1 to 26 (MERPGSNGSCSGCRLEGGPAARAASG) the chain is Extracellular. Residue asparagine 7 is glycosylated (N-linked (GlcNAc...) asparagine). The chain crosses the membrane as a helical span at residues 27-47 (LAAVLIVTIVVDVLGNALVIL). Topologically, residues 48–60 (SVLRNKKLRNAGN) are cytoplasmic. A helical transmembrane segment spans residues 61–81 (IFVVSLSVADLVVAVYPYPLI). Over 82–99 (LSAIFHNGWTMGNIHCQI) the chain is Extracellular. Cysteine 97 and cysteine 174 form a disulfide bridge. Residues 100–120 (SGFLMGLSVIGSIFNITAIAI) form a helical membrane-spanning segment. At 121–139 (NRYCYICHSLRYDKLFNLK) the chain is on the cytoplasmic side. The chain crosses the membrane as a helical span at residues 140 to 160 (NTCCYICLTWTLTVVAIVPNF). Residues 161-184 (FVGSLQYDPRIYSCTFAQTVSTSY) lie on the Extracellular side of the membrane. A helical membrane pass occupies residues 185-205 (TITVVVVHFIVPLSIVTFCYL). Over 206–237 (RIWILVIQVKHRVRQDCKQKIRAADIRNFLTM) the chain is Cytoplasmic. A helical membrane pass occupies residues 238–258 (FVVFVLFAVCWGPLNFIGLAV). The Extracellular portion of the chain corresponds to 259-271 (SINPSKVQPHIPE). Residues 272–292 (WLFVLSYFMAYFNSCLNAVIY) form a helical membrane-spanning segment. The Cytoplasmic portion of the chain corresponds to 293–346 (GLLNQNFRKEYKRILLMLRTPRLLFIDVSKGGTEGLKSKPSPAVTNNNQAEIHL). The tract at residues 326–346 (EGLKSKPSPAVTNNNQAEIHL) is disordered. Over residues 335-346 (AVTNNNQAEIHL) the composition is skewed to polar residues.

This sequence belongs to the G-protein coupled receptor 1 family. Expressed in optic tectum, neostriatum, hypothalamus, thalamus and pineal gland, less in cerebellum and retina.

The protein localises to the cell membrane. Functionally, high affinity receptor for melatonin. The activity of this receptor is mediated by pertussis toxin sensitive G proteins that inhibits adenylate cyclase activity. This is Melatonin receptor type 1C from Gallus gallus (Chicken).